A 210-amino-acid chain; its full sequence is MGQVFLLMPVLLVSCFLSQGAAIENQRLFNIAVSRVQHLHLLAQKMFNDFDGTLLPDERRQLNKIFLLDFCNSDSIVSPVDKHETQKSSVLKLLHISFRLIESWEYPSQTLIISNSLLVGNANQISEKLSDLKVGINLLIMGSQDGLLSLDDNDSQQLPRYGNYYQNPGGDGNVRRNYELLACFKKDMHKVETYLTVAKCRKSLEANCTL.

The first 22 residues, 1–22, serve as a signal peptide directing secretion; it reads MGQVFLLMPVLLVSCFLSQGAA. Residue His38 participates in Zn(2+) binding. Cys71 and Cys183 are oxidised to a cystine. Glu192 is a Zn(2+) binding site. A disulfide bridge connects residues Cys200 and Cys208.

It belongs to the somatotropin/prolactin family.

The protein resides in the secreted. Growth hormone plays an important role in growth control and is involved in the regulation of several anabolic processes. Implicated as an osmoregulatory substance important for seawater adaptation. The protein is Somatotropin (gh) of Oncorhynchus kisutch (Coho salmon).